The chain runs to 240 residues: 1-(5-phosphoribosyl)-5-[(5-phosphoribosylamino)methylideneamino] imidazole-4-carboxamide isomerase (240 aa).

Residue D10 is the Proton acceptor of the active site. D132 serves as the catalytic Proton donor.

The protein belongs to the HisA/HisF family.

It is found in the cytoplasm. It carries out the reaction 1-(5-phospho-beta-D-ribosyl)-5-[(5-phospho-beta-D-ribosylamino)methylideneamino]imidazole-4-carboxamide = 5-[(5-phospho-1-deoxy-D-ribulos-1-ylimino)methylamino]-1-(5-phospho-beta-D-ribosyl)imidazole-4-carboxamide. The protein operates within amino-acid biosynthesis; L-histidine biosynthesis; L-histidine from 5-phospho-alpha-D-ribose 1-diphosphate: step 4/9. This Methanocella arvoryzae (strain DSM 22066 / NBRC 105507 / MRE50) protein is 1-(5-phosphoribosyl)-5-[(5-phosphoribosylamino)methylideneamino] imidazole-4-carboxamide isomerase.